A 453-amino-acid polypeptide reads, in one-letter code: Chromosomal replication initiator protein DnaA (453 aa).

A domain I, interacts with DnaA modulators region spans residues 1-76 (MSGDAAALWP…LAWRQQLPAV (76 aa)). Residues 76-115 (VRSVSVRGGVAATERAATLASVPLPTFDAPAAPAANPALL) form a domain II region. Residues 116–333 (GFDPRLSFDR…GALNKLLAYA (218 aa)) form a domain III, AAA+ region region. Gly-160, Gly-162, Lys-163, and Thr-164 together coordinate ATP. The interval 334–453 (ALTGARIDLM…IAAIRRSLNS (120 aa)) is domain IV, binds dsDNA.

This sequence belongs to the DnaA family. In terms of assembly, oligomerizes as a right-handed, spiral filament on DNA at oriC.

The protein resides in the cytoplasm. In terms of biological role, plays an essential role in the initiation and regulation of chromosomal replication. ATP-DnaA binds to the origin of replication (oriC) to initiate formation of the DNA replication initiation complex once per cell cycle. Binds the DnaA box (a 9 base pair repeat at the origin) and separates the double-stranded (ds)DNA. Forms a right-handed helical filament on oriC DNA; dsDNA binds to the exterior of the filament while single-stranded (ss)DNA is stabiized in the filament's interior. The ATP-DnaA-oriC complex binds and stabilizes one strand of the AT-rich DNA unwinding element (DUE), permitting loading of DNA polymerase. After initiation quickly degrades to an ADP-DnaA complex that is not apt for DNA replication. Binds acidic phospholipids. The chain is Chromosomal replication initiator protein DnaA from Sphingopyxis alaskensis (strain DSM 13593 / LMG 18877 / RB2256) (Sphingomonas alaskensis).